The primary structure comprises 329 residues: Cathepsin K (329 aa).

Positions 1-15 (MWVFKFLLLPMVSFA) are cleaved as a signal peptide. Residues 16–114 (LSPEEMLDTQ…TLYTPEWEGR (99 aa)) constitute a propeptide, activation peptide. N103 carries N-linked (GlcNAc...) asparagine glycosylation. Cystine bridges form between C136–C177 and C170–C210. C139 is a catalytic residue. N213 carries N-linked (GlcNAc...) asparagine glycosylation. A disulfide bond links C269 and C318. Catalysis depends on residues H276 and N296.

This sequence belongs to the peptidase C1 family. In terms of tissue distribution, predominantly expressed in bones. Expressed in thyroid epithelial cells.

Its subcellular location is the lysosome. It localises to the secreted. It is found in the apical cell membrane. It carries out the reaction Broad proteolytic activity. With small-molecule substrates and inhibitors, the major determinant of specificity is P2, which is preferably Leu, Met &gt; Phe, and not Arg.. Thiol protease involved in osteoclastic bone resorption. Displays potent endoprotease activity against fibrinogen at acid pH. May play an important role in extracellular matrix degradation. Involved in the release of thyroid hormone thyroxine (T4) by limited proteolysis of TG/thyroglobulin in the thyroid follicle lumen. This is Cathepsin K (Ctsk) from Mus musculus (Mouse).